Reading from the N-terminus, the 932-residue chain is UPF0182 protein Dred_1797 (932 aa).

7 consecutive transmembrane segments (helical) span residues 11–31 (LVIL…GLYI), 53–73 (IGLR…NLML), 118–138 (LTLA…SSVA), 180–200 (ILAS…LVTD), 209–229 (IFRF…FFVI), 264–284 (YKAL…NIFL), and 292–312 (YAIG…PAII). The disordered stretch occupies residues 861–883 (DRPQQGVPPATDQPAGQQPAPEK).

It belongs to the UPF0182 family.

The protein localises to the cell membrane. The protein is UPF0182 protein Dred_1797 of Desulforamulus reducens (strain ATCC BAA-1160 / DSM 100696 / MI-1) (Desulfotomaculum reducens).